The primary structure comprises 200 residues: Charged multivesicular body protein 6 (200 aa).

The N-myristoyl glycine moiety is linked to residue G2. A coiled-coil region spans residues 10–94 (RSRVTEQDKA…ERMVQDIEFT (85 aa)). Residues 168 to 179 (LELPDVPSEPLP) carry the Type-2 MIT-interacting motif motif. A disordered region spans residues 169–200 (ELPDVPSEPLPEEPPEATPVKNRPKPELVAAS).

This sequence belongs to the SNF7 family. As to quaternary structure, probable core component of the endosomal sorting required for transport complex III (ESCRT-III). ESCRT-III components are thought to multimerize to form a flat lattice on the perimeter membrane of the endosome.

The protein resides in the endomembrane system. It is found in the late endosome membrane. In terms of biological role, probable core component of the endosomal sorting required for transport complex III (ESCRT-III) which is involved in multivesicular bodies (MVBs) formation and sorting of endosomal cargo proteins into MVBs. MVBs contain intraluminal vesicles (ILVs) that are generated by invagination and scission from the limiting membrane of the endosome and mostly are delivered to lysosomes enabling degradation of membrane proteins, such as stimulated growth factor receptors, lysosomal enzymes and lipids. In the ESCRT-III complex, it probably serves as an acceptor for the ESCRT-II complex on endosomal membranes. The sequence is that of Charged multivesicular body protein 6 (CHMP6) from Gallus gallus (Chicken).